Consider the following 507-residue polypeptide: Glycogen synthase (507 aa).

Lysine 15 is an ADP-alpha-D-glucose binding site.

Belongs to the glycosyltransferase 1 family. Bacterial/plant glycogen synthase subfamily.

The enzyme catalyses [(1-&gt;4)-alpha-D-glucosyl](n) + ADP-alpha-D-glucose = [(1-&gt;4)-alpha-D-glucosyl](n+1) + ADP + H(+). It participates in glycan biosynthesis; glycogen biosynthesis. Its function is as follows. Synthesizes alpha-1,4-glucan chains using ADP-glucose. The protein is Glycogen synthase of Rhodopirellula baltica (strain DSM 10527 / NCIMB 13988 / SH1).